The following is an 897-amino-acid chain: Probable bifunctional chitinase/lysozyme (897 aa).

Positions 1–24 (MKLNIFTKSMIGMGLVCSALPALA) are cleaved as a signal peptide. The Chitin-binding type-3 1 domain maps to 25 to 91 (MEAWNNQQGG…SQFGNTLSCE (67 aa)). 3 disordered regions span residues 90–127 (CEKS…SNSS), 182–222 (TEIS…PADK), and 287–333 (QYGN…DSVN). Residues 95-111 (SSSSSNSNTPASNTPAN) show a composition bias toward low complexity. Composition is skewed to polar residues over residues 113–127 (GSAT…SNSS) and 182–197 (TEIS…TSAP). The Chitin-binding type-3 2 domain occupies 128–194 (VVAWNKQQGG…SETSNPQSCT (67 aa)). Residues 198–216 (QPSPDVKPAPDVKPAPDVQ) show a composition bias toward pro residues. One can recognise a Chitin-binding type-3 3 domain in the interval 229–295 (VVAWKGQEGS…SQYGNPGSCS (67 aa)). A compositionally biased stretch (pro residues) spans 309-318 (DPTPETPVTP). The segment covering 322 to 333 (NSEPSTPADSVN) has biased composition (polar residues). 2 consecutive Chitin-binding type-3 domains span residues 337-403 (LQAW…TTCE) and 459-529 (AKAW…PQFN). Positions 586 to 877 (KHVYAPYVDF…TNLSPEFHGL (292 aa)) constitute a GH18 domain. C628 and C673 are joined by a disulfide. E700 acts as the Proton donor in catalysis.

This sequence belongs to the glycosyl hydrolase 18 family. Chitinase class II subfamily.

It localises to the periplasm. The catalysed reaction is Random endo-hydrolysis of N-acetyl-beta-D-glucosaminide (1-&gt;4)-beta-linkages in chitin and chitodextrins.. It catalyses the reaction Hydrolysis of (1-&gt;4)-beta-linkages between N-acetylmuramic acid and N-acetyl-D-glucosamine residues in a peptidoglycan and between N-acetyl-D-glucosamine residues in chitodextrins.. Its function is as follows. Bifunctional enzyme with lysozyme/chitinase activity. This chain is Probable bifunctional chitinase/lysozyme (chiA), found in Escherichia coli (strain K12).